Here is a 525-residue protein sequence, read N- to C-terminus: Glucose-6-phosphate isomerase (525 aa).

The active-site Proton donor is E347. Residues H378 and K493 contribute to the active site.

It belongs to the GPI family.

It localises to the cytoplasm. The enzyme catalyses alpha-D-glucose 6-phosphate = beta-D-fructose 6-phosphate. It participates in carbohydrate biosynthesis; gluconeogenesis. The protein operates within carbohydrate degradation; glycolysis; D-glyceraldehyde 3-phosphate and glycerone phosphate from D-glucose: step 2/4. Functionally, catalyzes the reversible isomerization of glucose-6-phosphate to fructose-6-phosphate. The protein is Glucose-6-phosphate isomerase of Chlamydia trachomatis serovar D (strain ATCC VR-885 / DSM 19411 / UW-3/Cx).